Consider the following 227-residue polypeptide: PKHD-type hydroxylase Bxeno_B2756 (227 aa).

The Fe2OG dioxygenase domain maps to 80 to 179 (QVYPPLFNRY…RVASFFWVQS (100 aa)). 3 residues coordinate Fe cation: histidine 98, aspartate 100, and histidine 160. A 2-oxoglutarate-binding site is contributed by arginine 170.

Requires Fe(2+) as cofactor. L-ascorbate is required as a cofactor.

This chain is PKHD-type hydroxylase Bxeno_B2756, found in Paraburkholderia xenovorans (strain LB400).